The chain runs to 286 residues: Prepilin leader peptidase/N-methyltransferase (286 aa).

Residues 10 to 30 (FAVPLAAVLGLLVGSFLNVVI) traverse the membrane as a helical segment. Residues cysteine 70, cysteine 73, cysteine 95, and cysteine 98 each contribute to the Zn(2+) site. Helical transmembrane passes span 102–122 (ISIR…LVAW), 126–146 (WSWI…LTFI), 157–177 (MTLP…FVPL), 181–201 (VLGA…YKLL), 224–244 (ISAL…AAIV), and 250–270 (GRHF…FTAN).

It belongs to the peptidase A24 family. Zn(2+) is required as a cofactor.

The protein resides in the cell inner membrane. It catalyses the reaction Typically cleaves a -Gly-|-Phe- bond to release an N-terminal, basic peptide of 5-8 residues from type IV prepilin, and then N-methylates the new N-terminal amino group, the methyl donor being S-adenosyl-L-methionine.. In terms of biological role, plays an essential role in type IV pili and type II pseudopili formation by proteolytically removing the leader sequence from substrate proteins and subsequently monomethylating the alpha-amino group of the newly exposed N-terminal phenylalanine. The sequence is that of Prepilin leader peptidase/N-methyltransferase (pilD) from Neisseria gonorrhoeae.